Here is a 109-residue protein sequence, read N- to C-terminus: Tetraspanin-31 (109 aa).

The Cytoplasmic segment spans residues 1 to 12 (MVCGGFACSKNA). The helical transmembrane segment at 13–33 (LCALNVVYMLVGLLLIGVAAW) threads the bilayer. The Extracellular segment spans residues 34–44 (AKGLGLVSSIH). Residues 45–65 (IIGGVIAVGVFLLLIAVAGLV) form a helical membrane-spanning segment. At 66–72 (GAVNHHQ) the chain is on the cytoplasmic side. Residues 73 to 93 (VLLFFYMIILGLVFIFQFGIS) form a helical membrane-spanning segment. At 94–109 (CSCLAINLSKQAGIIN) the chain is on the extracellular side. N-linked (GlcNAc...) asparagine glycosylation occurs at asparagine 100.

It belongs to the tetraspanin (TM4SF) family.

The protein resides in the membrane. The protein is Tetraspanin-31 (TSPAN31) of Sus scrofa (Pig).